The chain runs to 274 residues: Penicillin-insensitive murein endopeptidase (274 aa).

The N-terminal stretch at 1–19 (MKNTVIALLALLASAGSLA) is a signal peptide. 3 disulfides stabilise this stretch: Cys-44–Cys-265, Cys-187–Cys-235, and Cys-216–Cys-223. Residues His-110, His-113, Asp-120, Asp-147, His-150, and His-211 each contribute to the Zn(2+) site. Residues 224–263 (EDQAPPPPGDGCGAELQSWFEPPKPGSTPPVKKTPPPLPP) are disordered. Pro residues predominate over residues 245–263 (PPKPGSTPPVKKTPPPLPP).

It belongs to the peptidase M74 family. Dimer. The cofactor is Zn(2+).

The protein resides in the periplasm. Murein endopeptidase that cleaves the D-alanyl-meso-2,6-diamino-pimelyl amide bond that connects peptidoglycan strands. Likely plays a role in the removal of murein from the sacculus. This chain is Penicillin-insensitive murein endopeptidase, found in Klebsiella pneumoniae subsp. pneumoniae (strain ATCC 700721 / MGH 78578).